Reading from the N-terminus, the 157-residue chain is Endoribonuclease YbeY (157 aa).

Positions 116, 120, and 126 each coordinate Zn(2+).

Belongs to the endoribonuclease YbeY family. Zn(2+) serves as cofactor.

The protein localises to the cytoplasm. In terms of biological role, single strand-specific metallo-endoribonuclease involved in late-stage 70S ribosome quality control and in maturation of the 3' terminus of the 16S rRNA. The polypeptide is Endoribonuclease YbeY (Pseudarthrobacter chlorophenolicus (strain ATCC 700700 / DSM 12829 / CIP 107037 / JCM 12360 / KCTC 9906 / NCIMB 13794 / A6) (Arthrobacter chlorophenolicus)).